The chain runs to 240 residues: Molybdate/tungstate import ATP-binding protein WtpC (240 aa).

The ABC transporter domain occupies 2 to 227 (FLKVRAEKRL…KNGEVAEFLS (226 aa)). Position 31–38 (31–38 (GPTGAGKS)) interacts with ATP.

This sequence belongs to the ABC transporter superfamily. Sulfate/tungstate importer (TC 3.A.1.6) family. The complex is composed of two ATP-binding proteins (WtpC), two transmembrane proteins (WtpB) and a solute-binding protein (WtpA).

Its subcellular location is the cell membrane. It carries out the reaction tungstate(in) + ATP + H2O = tungstate(out) + ADP + phosphate + H(+). In terms of biological role, part of the ABC transporter complex WtpABC involved in molybdate/tungstate import. Responsible for energy coupling to the transport system. This chain is Molybdate/tungstate import ATP-binding protein WtpC (wtpC), found in Archaeoglobus fulgidus (strain ATCC 49558 / DSM 4304 / JCM 9628 / NBRC 100126 / VC-16).